A 236-amino-acid chain; its full sequence is Ubiquinone biosynthesis O-methyltransferase (236 aa).

The S-adenosyl-L-methionine site is built by Arg-36, Gly-56, Asp-77, and Met-125.

Belongs to the methyltransferase superfamily. UbiG/COQ3 family.

The enzyme catalyses a 3-demethylubiquinol + S-adenosyl-L-methionine = a ubiquinol + S-adenosyl-L-homocysteine + H(+). It carries out the reaction a 3-(all-trans-polyprenyl)benzene-1,2-diol + S-adenosyl-L-methionine = a 2-methoxy-6-(all-trans-polyprenyl)phenol + S-adenosyl-L-homocysteine + H(+). It participates in cofactor biosynthesis; ubiquinone biosynthesis. In terms of biological role, O-methyltransferase that catalyzes the 2 O-methylation steps in the ubiquinone biosynthetic pathway. The sequence is that of Ubiquinone biosynthesis O-methyltransferase from Glaesserella parasuis serovar 5 (strain SH0165) (Haemophilus parasuis).